A 297-amino-acid chain; its full sequence is Tyrosine recombinase XerD (297 aa).

A Core-binding (CB) domain is found at 1 to 86 (MNDLIDDFLH…SLRSFFHYLM (86 aa)). A Tyr recombinase domain is found at 107–291 (SLPKVLNLDD…TKLRLKDVYK (185 aa)). Active-site residues include Arg-147, Lys-171, His-243, Arg-246, and His-269. Tyr-278 functions as the O-(3'-phospho-DNA)-tyrosine intermediate in the catalytic mechanism.

It belongs to the 'phage' integrase family. XerD subfamily. In terms of assembly, forms a cyclic heterotetrameric complex composed of two molecules of XerC and two molecules of XerD.

It is found in the cytoplasm. Functionally, site-specific tyrosine recombinase, which acts by catalyzing the cutting and rejoining of the recombining DNA molecules. The XerC-XerD complex is essential to convert dimers of the bacterial chromosome into monomers to permit their segregation at cell division. It also contributes to the segregational stability of plasmids. The polypeptide is Tyrosine recombinase XerD (Listeria innocua serovar 6a (strain ATCC BAA-680 / CLIP 11262)).